A 384-amino-acid chain; its full sequence is Cytochrome b (384 aa).

Helical transmembrane passes span 32–52, 76–98, 113–133, and 179–199; these read FGFL…FLAI, WLLR…IHIS, TWVV…MGYV, and FFSF…VHMA. 2 residues coordinate heme b: His-82 and His-96. His-183 and His-197 together coordinate heme b. A ubiquinone is bound at residue His-202. 4 consecutive transmembrane segments (helical) span residues 225-245, 289-309, 321-341, and 348-368; these read FIIK…LFVY, LGGV…PWIT, LYKK…WIGG, and YVVI…IFIP.

This sequence belongs to the cytochrome b family. As to quaternary structure, the main subunits of complex b-c1 are: cytochrome b, cytochrome c1 and the Rieske protein. Heme b serves as cofactor.

It is found in the mitochondrion inner membrane. Component of the ubiquinol-cytochrome c reductase complex (complex III or cytochrome b-c1 complex) that is part of the mitochondrial respiratory chain. The b-c1 complex mediates electron transfer from ubiquinol to cytochrome c. Contributes to the generation of a proton gradient across the mitochondrial membrane that is then used for ATP synthesis. The protein is Cytochrome b (MT-CYB) of Cyanidium caldarium (Red alga).